A 259-amino-acid chain; its full sequence is Ribosomal RNA large subunit methyltransferase E (259 aa).

Residues G58, W60, D78, D96, and D120 each coordinate S-adenosyl-L-methionine. The active-site Proton acceptor is K160.

The protein belongs to the class I-like SAM-binding methyltransferase superfamily. RNA methyltransferase RlmE family.

It is found in the cytoplasm. It catalyses the reaction uridine(2552) in 23S rRNA + S-adenosyl-L-methionine = 2'-O-methyluridine(2552) in 23S rRNA + S-adenosyl-L-homocysteine + H(+). Specifically methylates the uridine in position 2552 of 23S rRNA at the 2'-O position of the ribose in the fully assembled 50S ribosomal subunit. The sequence is that of Ribosomal RNA large subunit methyltransferase E from Methanococcus vannielii (strain ATCC 35089 / DSM 1224 / JCM 13029 / OCM 148 / SB).